We begin with the raw amino-acid sequence, 626 residues long: Threonine--tRNA ligase (626 aa).

The interval 1–145 is editing domain; sequence MRMLLIHSDY…SRTIVPEKAV (145 aa). The catalytic stretch occupies residues 207 to 506; the sequence is PHVRLMLEQE…QEKGIKPMYP (300 aa). The Zn(2+) site is built by Cys299, His351, and His475.

Belongs to the class-II aminoacyl-tRNA synthetase family. Homodimer. It depends on Zn(2+) as a cofactor.

The protein resides in the cytoplasm. It catalyses the reaction tRNA(Thr) + L-threonine + ATP = L-threonyl-tRNA(Thr) + AMP + diphosphate + H(+). Catalyzes the attachment of threonine to tRNA(Thr) in a two-step reaction: L-threonine is first activated by ATP to form Thr-AMP and then transferred to the acceptor end of tRNA(Thr). Also edits incorrectly charged L-seryl-tRNA(Thr). This chain is Threonine--tRNA ligase, found in Thermococcus kodakarensis (strain ATCC BAA-918 / JCM 12380 / KOD1) (Pyrococcus kodakaraensis (strain KOD1)).